We begin with the raw amino-acid sequence, 141 residues long: Hemoglobin subunit alpha (141 aa).

In terms of domain architecture, Globin spans 1-141 (VLSPADKSNV…VSTVLTSKYR (141 aa)). Ser-3 is subject to Phosphoserine. N6-succinyllysine is present on residues Lys-7 and Lys-11. Lys-16 carries the N6-acetyllysine; alternate modification. At Lys-16 the chain carries N6-succinyllysine; alternate. A Phosphotyrosine modification is found at Tyr-24. Phosphoserine is present on Ser-35. N6-succinyllysine is present on Lys-40. Ser-49 bears the Phosphoserine mark. His-58 contributes to the O2 binding site. His-87 serves as a coordination point for heme b. Ser-102 carries the phosphoserine modification. Residue Thr-108 is modified to Phosphothreonine. Residues Ser-124 and Ser-131 each carry the phosphoserine modification. 2 positions are modified to phosphothreonine: Thr-134 and Thr-137. Ser-138 bears the Phosphoserine mark.

The protein belongs to the globin family. In terms of assembly, heterotetramer of two alpha chains and two beta chains. In terms of tissue distribution, red blood cells.

In terms of biological role, involved in oxygen transport from the lung to the various peripheral tissues. Hemopressin acts as an antagonist peptide of the cannabinoid receptor CNR1. Hemopressin-binding efficiently blocks cannabinoid receptor CNR1 and subsequent signaling. This is Hemoglobin subunit alpha (HBA) from Saguinus mystax (Moustached tamarin).